Consider the following 73-residue polypeptide: Translation initiation factor IF-1 (73 aa).

An S1-like domain is found at 1–72 (MSKKDVIELE…SRGRIVYRKK (72 aa)).

This sequence belongs to the IF-1 family. As to quaternary structure, component of the 30S ribosomal translation pre-initiation complex which assembles on the 30S ribosome in the order IF-2 and IF-3, IF-1 and N-formylmethionyl-tRNA(fMet); mRNA recruitment can occur at any time during PIC assembly.

It localises to the cytoplasm. One of the essential components for the initiation of protein synthesis. Stabilizes the binding of IF-2 and IF-3 on the 30S subunit to which N-formylmethionyl-tRNA(fMet) subsequently binds. Helps modulate mRNA selection, yielding the 30S pre-initiation complex (PIC). Upon addition of the 50S ribosomal subunit IF-1, IF-2 and IF-3 are released leaving the mature 70S translation initiation complex. The protein is Translation initiation factor IF-1 of Fusobacterium nucleatum subsp. nucleatum (strain ATCC 25586 / DSM 15643 / BCRC 10681 / CIP 101130 / JCM 8532 / KCTC 2640 / LMG 13131 / VPI 4355).